Here is a 493-residue protein sequence, read N- to C-terminus: Cobyric acid synthase (493 aa).

Residues Pro246–Phe440 form the GATase cobBQ-type domain. The active-site Nucleophile is Cys326. His432 is a catalytic residue.

Belongs to the CobB/CobQ family. CobQ subfamily.

It functions in the pathway cofactor biosynthesis; adenosylcobalamin biosynthesis. Catalyzes amidations at positions B, D, E, and G on adenosylcobyrinic A,C-diamide. NH(2) groups are provided by glutamine, and one molecule of ATP is hydrogenolyzed for each amidation. The polypeptide is Cobyric acid synthase (Clostridium botulinum (strain 657 / Type Ba4)).